The following is a 126-amino-acid chain: Large ribosomal subunit protein bL12 (126 aa).

This sequence belongs to the bacterial ribosomal protein bL12 family. As to quaternary structure, homodimer. Part of the ribosomal stalk of the 50S ribosomal subunit. Forms a multimeric L10(L12)X complex, where L10 forms an elongated spine to which 2 to 4 L12 dimers bind in a sequential fashion. Binds GTP-bound translation factors.

Forms part of the ribosomal stalk which helps the ribosome interact with GTP-bound translation factors. Is thus essential for accurate translation. The protein is Large ribosomal subunit protein bL12 of Geotalea daltonii (strain DSM 22248 / JCM 15807 / FRC-32) (Geobacter daltonii).